The sequence spans 239 residues: MRSGVIAQKVGMTRVFTETGEHIPVTVLKLGNCQVVGHRTTEKNGYVALQLGSGSRKTVYMPKAERGQFAVAKVEPKRKLAEFRVSEDSLIPVGAEIQADHFVVGQFVDVTGTSVGKGFAGGMKRWNFGGLRATHGVSISHRSIGSTGGRQDPGKTWKNKKMPGHMGVDRITTLNLRVVQTDVERGLILVEGAVPGSKGGWISVRDAVKKPLPKEAPKPGKFKVAGEQAAEAPAMQEGA.

2 disordered regions span residues 140 to 164 (SHRS…KMPG) and 211 to 239 (PLPK…QEGA). The residue at position 151 (glutamine 151) is an N5-methylglutamine.

The protein belongs to the universal ribosomal protein uL3 family. As to quaternary structure, part of the 50S ribosomal subunit. Forms a cluster with proteins L14 and L19. In terms of processing, methylated by PrmB.

In terms of biological role, one of the primary rRNA binding proteins, it binds directly near the 3'-end of the 23S rRNA, where it nucleates assembly of the 50S subunit. This chain is Large ribosomal subunit protein uL3, found in Bradyrhizobium sp. (strain ORS 278).